The following is a 481-amino-acid chain: Protein nucleotidyltransferase YdiU (481 aa).

Positions 85, 87, 88, 108, 120, 121, 172, and 179 each coordinate ATP. Residue Asp-248 is the Proton acceptor of the active site. Positions 249 and 258 each coordinate Mg(2+). Asp-258 lines the ATP pocket.

The protein belongs to the SELO family. The cofactor is Mg(2+). It depends on Mn(2+) as a cofactor.

It carries out the reaction L-seryl-[protein] + ATP = 3-O-(5'-adenylyl)-L-seryl-[protein] + diphosphate. The enzyme catalyses L-threonyl-[protein] + ATP = 3-O-(5'-adenylyl)-L-threonyl-[protein] + diphosphate. The catalysed reaction is L-tyrosyl-[protein] + ATP = O-(5'-adenylyl)-L-tyrosyl-[protein] + diphosphate. It catalyses the reaction L-histidyl-[protein] + UTP = N(tele)-(5'-uridylyl)-L-histidyl-[protein] + diphosphate. It carries out the reaction L-seryl-[protein] + UTP = O-(5'-uridylyl)-L-seryl-[protein] + diphosphate. The enzyme catalyses L-tyrosyl-[protein] + UTP = O-(5'-uridylyl)-L-tyrosyl-[protein] + diphosphate. Its function is as follows. Nucleotidyltransferase involved in the post-translational modification of proteins. It can catalyze the addition of adenosine monophosphate (AMP) or uridine monophosphate (UMP) to a protein, resulting in modifications known as AMPylation and UMPylation. This chain is Protein nucleotidyltransferase YdiU, found in Cereibacter sphaeroides (strain ATCC 17023 / DSM 158 / JCM 6121 / CCUG 31486 / LMG 2827 / NBRC 12203 / NCIMB 8253 / ATH 2.4.1.) (Rhodobacter sphaeroides).